Here is a 221-residue protein sequence, read N- to C-terminus: Ras-related protein Rab-27A (221 aa).

N-acetylserine is present on Ser2. At Ser2 the chain carries Phosphoserine. 16–24 (GDSGVGKTS) provides a ligand contact to GTP. The short motif at 38–46 (FITTVGIDF) is the Effector region element. GTP-binding positions include 74 to 78 (DTAGQ), 133 to 136 (NKSD), and 163 to 165 (SAA). A disulfide bridge links Cys123 with Cys188. 2 S-geranylgeranyl cysteine lipidation sites follow: Cys219 and Cys221. Cys221 carries the cysteine methyl ester modification.

The protein belongs to the small GTPase superfamily. Rab family. As to quaternary structure, binds SYTL1, SLAC2B, MYRIP, SYTL3, SYTL4 and SYTL5. Interacts with RPH3A and RPH3A. Binds MLPH and SYTL2. Interacts with UNC13D. Does not interact with the BLOC-3 complex (heterodimer of HPS1 and HPS4). Interacts (GDP-bound form preferentially) with DENND10. Found in all the examined tissues except in brain. Low expression was found in thymus, kidney, muscle and placenta. Detected in melanocytes, and in most tumor cell lines examined. Expressed in cytotoxic T-lymphocytes (CTL) and mast cells.

The protein localises to the membrane. Its subcellular location is the melanosome. It localises to the late endosome. It is found in the lysosome. The catalysed reaction is GTP + H2O = GDP + phosphate + H(+). Its activity is regulated as follows. Regulated by guanine nucleotide exchange factors (GEFs) which promote the exchange of bound GDP for free GTP, GTPase activating proteins (GAPs) which increase the GTP hydrolysis activity, and GDP dissociation inhibitors which inhibit the dissociation of the nucleotide from the GTPase. Activated by GEFs such as DENND10. In terms of biological role, small GTPase which cycles between active GTP-bound and inactive GDP-bound states. In its active state, binds to a variety of effector proteins to regulate homeostasis of late endocytic pathway, including endosomal positioning, maturation and secretion. Plays a role in cytotoxic granule exocytosis in lymphocytes. Required for both granule maturation and granule docking and priming at the immunologic synapse. This Homo sapiens (Human) protein is Ras-related protein Rab-27A (RAB27A).